A 129-amino-acid polypeptide reads, in one-letter code: D-ribose pyranase (129 aa).

H20 functions as the Proton donor in the catalytic mechanism. Residues D28, H96, and 118 to 120 (YAN) contribute to the substrate site.

The protein belongs to the RbsD / FucU family. RbsD subfamily. Homodecamer.

Its subcellular location is the cytoplasm. The catalysed reaction is beta-D-ribopyranose = beta-D-ribofuranose. Its pathway is carbohydrate metabolism; D-ribose degradation; D-ribose 5-phosphate from beta-D-ribopyranose: step 1/2. In terms of biological role, catalyzes the interconversion of beta-pyran and beta-furan forms of D-ribose. This Halalkalibacterium halodurans (strain ATCC BAA-125 / DSM 18197 / FERM 7344 / JCM 9153 / C-125) (Bacillus halodurans) protein is D-ribose pyranase.